A 4466-amino-acid polypeptide reads, in one-letter code: Dynein beta chain, ciliary (4466 aa).

Residues 1–1813 form a stem region; it reads MADVVDPRLE…YANICDAQFK (1813 aa). Residue 154 to 161 coordinates ATP; sequence AGQVKGKT. Coiled coils occupy residues 733-805, 1036-1056, 1306-1337, and 1443-1468; these read TVLE…WTKQ, TLDQ…EADE, WLEI…AWDA, and LLKS…MTSK. AAA stretches follow at residues 1814–2035, 2095–2316, 2422–2669, and 2767–3016; these read YSYE…VLVV, KVVK…VRFK, ELDP…VFQG, and TYNE…ERRY. ATP-binding positions include 1852–1859, 2133–2140, 2460–2467, and 2805–2812; these read GPAGTGKT, GNAGTGKS, GNAGLGKS, and GVGGSGKQ. Coiled coils occupy residues 3033–3092, 3263–3325, and 3573–3642; these read SLLS…QVVG, EPKR…SRTI, and QERP…EEAK. Residues 3033–3325 form a stalk region; it reads SLLSMKSKEL…QEAEATSRTI (293 aa). 2 AAA regions span residues 3409–3636 and 3846–4072; these read LTDD…EISV and VRNF…VLYN.

Belongs to the dynein heavy chain family. In terms of assembly, consists of at least two heavy chains (alpha and beta), three intermediate chains and several light chains.

It is found in the cell projection. The protein localises to the cilium. The protein resides in the flagellum. Its subcellular location is the cytoplasm. It localises to the cytoskeleton. It is found in the flagellum axoneme. Its function is as follows. Force generating protein of eukaryotic cilia and flagella. Produces force towards the minus ends of microtubules. Dynein has ATPase activity; the force-producing power stroke is thought to occur on release of ADP. This chain is Dynein beta chain, ciliary, found in Tripneustes gratilla (Hawaian sea urchin).